Reading from the N-terminus, the 147-residue chain is MGFIFSKSMNENMKNQQEFMVTHARLQLERHLTMQNEMRERQMAMQIAWSREFLKYFGTFFGIATISLATGALKRKKPAFLVPIVPLSFIFTYQYDLGYGTLLQRMKSEAEDILETEKTKLELPKGLITFESLEKARREQSKLFSDK.

Topologically, residues Met-1–Glu-52 are extracellular. A helical membrane pass occupies residues Phe-53–Leu-73. Residues Lys-74–Pro-78 are Cytoplasmic-facing. The helical transmembrane segment at Ala-79–Tyr-99 threads the bilayer. Over Gly-100–Lys-147 the chain is Extracellular.

In terms of assembly, interacts with PLAT. Interacts with PLAUR. In terms of tissue distribution, expressed in monocytes; detected in differentiated monocytes but not in progenitor cells. Expressed in adrenal medulla and hippocampus.

It is found in the cell membrane. In terms of biological role, receptor for plasminogen. Regulates urokinase plasminogen activator-dependent and stimulates tissue-type plasminogen activator-dependent cell surface plasminogen activation. Proposed to be part of a local catecholaminergic cell plasminogen activation system that regulates neuroendocrine prohormone processing. Involved in regulation of inflammatory response; regulates monocyte chemotactic migration and matrix metalloproteinase activation, such as of MMP2 and MMP9. The polypeptide is Plasminogen receptor (KT) (Plgrkt) (Mus musculus (Mouse)).